Here is a 393-residue protein sequence, read N- to C-terminus: tRNA(Met) cytidine acetate ligase (393 aa).

The ATP site is built by glycine 81, asparagine 142, and arginine 167.

The protein belongs to the TmcAL family.

The protein localises to the cytoplasm. The enzyme catalyses cytidine(34) in elongator tRNA(Met) + acetate + ATP = N(4)-acetylcytidine(34) in elongator tRNA(Met) + AMP + diphosphate. Functionally, catalyzes the formation of N(4)-acetylcytidine (ac(4)C) at the wobble position of elongator tRNA(Met), using acetate and ATP as substrates. First activates an acetate ion to form acetyladenylate (Ac-AMP) and then transfers the acetyl group to tRNA to form ac(4)C34. The sequence is that of tRNA(Met) cytidine acetate ligase from Bacillus thuringiensis (strain Al Hakam).